A 387-amino-acid polypeptide reads, in one-letter code: EARP-interacting protein homolog (387 aa).

WD repeat units lie at residues 132–172, 182–222, 226–266, and 270–310; these read TAHG…TKSV, KGQL…QIYC, AHGQ…EPVK, and EHSH…SEPF. Positions 311–339 are disordered; it reads GHLVDDEDLSDQEDNPQEEKTKEPLQDSI. Over residues 315 to 326 the composition is skewed to acidic residues; sequence DDEDLSDQEDNP. Residues 345–385 form a WD 5 repeat; it reads EHEDSVYAVEWSSADPWLFASLSYDGRLVINRVPRALKYNI.

This sequence belongs to the WD repeat EIPR1 family.

Its subcellular location is the golgi apparatus. It is found in the trans-Golgi network. May act as a component of endosomal retrieval machinery that is involved in protein transport from early endosomes to either recycling endosomes or the trans-Golgi network. This is EARP-interacting protein homolog from Xenopus laevis (African clawed frog).